A 647-amino-acid chain; its full sequence is tRNA 5-methylaminomethyl-2-thiouridine biosynthesis bifunctional protein MnmC (647 aa).

The tract at residues 1-227 is tRNA (mnm(5)s(2)U34)-methyltransferase; that stretch reads MLTWKNNLTP…KREMLIGSYS (227 aa). Residues 256-647 form an FAD-dependent cmnm(5)s(2)U34 oxidoreductase region; it reads VGAGIAGTTL…ARFLYRKVRK (392 aa).

This sequence in the N-terminal section; belongs to the methyltransferase superfamily. tRNA (mnm(5)s(2)U34)-methyltransferase family. The protein in the C-terminal section; belongs to the DAO family. Requires FAD as cofactor.

The protein localises to the cytoplasm. The catalysed reaction is 5-aminomethyl-2-thiouridine(34) in tRNA + S-adenosyl-L-methionine = 5-methylaminomethyl-2-thiouridine(34) in tRNA + S-adenosyl-L-homocysteine + H(+). Catalyzes the last two steps in the biosynthesis of 5-methylaminomethyl-2-thiouridine (mnm(5)s(2)U) at the wobble position (U34) in tRNA. Catalyzes the FAD-dependent demodification of cmnm(5)s(2)U34 to nm(5)s(2)U34, followed by the transfer of a methyl group from S-adenosyl-L-methionine to nm(5)s(2)U34, to form mnm(5)s(2)U34. The sequence is that of tRNA 5-methylaminomethyl-2-thiouridine biosynthesis bifunctional protein MnmC from Leptospira interrogans serogroup Icterohaemorrhagiae serovar copenhageni (strain Fiocruz L1-130).